The primary structure comprises 430 residues: Adenylosuccinate synthetase (430 aa).

GTP is bound by residues 12–18 (GDEGKGK) and 40–42 (GHT). The active-site Proton acceptor is aspartate 13. The Mg(2+) site is built by aspartate 13 and glycine 40. Residues 13-16 (DEGK), 38-41 (NAGH), threonine 128, arginine 142, glutamine 223, threonine 238, and arginine 302 each bind IMP. Catalysis depends on histidine 41, which acts as the Proton donor. GTP-binding positions include 330–332 (SID) and 412–414 (SVG).

The protein belongs to the adenylosuccinate synthetase family. As to quaternary structure, homodimer. Mg(2+) serves as cofactor.

The protein resides in the cytoplasm. The catalysed reaction is IMP + L-aspartate + GTP = N(6)-(1,2-dicarboxyethyl)-AMP + GDP + phosphate + 2 H(+). It functions in the pathway purine metabolism; AMP biosynthesis via de novo pathway; AMP from IMP: step 1/2. In terms of biological role, plays an important role in the de novo pathway of purine nucleotide biosynthesis. Catalyzes the first committed step in the biosynthesis of AMP from IMP. The chain is Adenylosuccinate synthetase from Bacillus subtilis (strain 168).